A 131-amino-acid polypeptide reads, in one-letter code: Cyclin-dependent kinase 4 inhibitor B (131 aa).

ANK repeat units follow at residues 6–35 (GGDA…DPNR), 39–67 (FGRR…DPNC), 72–101 (TLTR…RLDV), and 105–131 (WGRL…TAGD).

This sequence belongs to the CDKN2 cyclin-dependent kinase inhibitor family. In terms of assembly, heterodimer of CDKN2B with CDK4 or CDK6.

Its function is as follows. Interacts strongly with CDK4 and CDK6. Potent inhibitor. Potential effector of TGF-beta induced cell cycle arrest. This is Cyclin-dependent kinase 4 inhibitor B (CDKN2B) from Bos taurus (Bovine).